The chain runs to 745 residues: Dipeptidyl aminopeptidase 4 (745 aa).

Positions 1–22 (MRLALFALFALMTVATALPAHA) are cleaved as a signal peptide. Positions 208 and 209 each coordinate substrate. Residues Ser-613, Asp-689, and His-721 each act as charge relay system in the active site.

This sequence belongs to the peptidase S9B family. In terms of assembly, homodimer.

It is found in the cytoplasm. The protein resides in the periplasm. The enzyme catalyses Release of an N-terminal dipeptide, Xaa-Yaa-|-Zaa-, from a polypeptide, preferentially when Yaa is Pro, provided Zaa is neither Pro nor hydroxyproline.. With respect to regulation, completely inhibited by the serine protease inhibitor diisopropyl fluorophosphate (DFP) and moderately by N-tosyl-L-phenyl-alanyl chloromethyl ketone (TPCK). Somewhat inhibited by phenylmethanesulfonyl fluoride (PMSF). Activity is not affected by thiol- or metalloprotease inhibitors, such as iodoacetate (IAA), EDTA, N-tosyl-L-lysyl chloromethyl ketone (TLCK), o-phenanthlorine, N-ethylmaleimide (NEM) or dithiothreitol (DTT). Its function is as follows. Catalyzes the sequential release of Tyr-Pro, Phe-Pro and Gly-Pro from the N-terminus of peptides and proteins. Is able to cleaves bioactive peptide beta-casomorphin. This Pseudoxanthomonas mexicana protein is Dipeptidyl aminopeptidase 4.